We begin with the raw amino-acid sequence, 218 residues long: Ras-related protein Rab-27B (218 aa).

Threonine 2 is subject to N-acetylthreonine. Residue 16-24 (GDSGVGKTT) participates in GTP binding. The Effector region motif lies at 38 to 46 (FITTVGIDF). GTP is bound by residues 74–78 (DTAGQ), 133–136 (NKAD), and 163–165 (SAA). Cysteine 123 and cysteine 188 form a disulfide bridge. Residues 194–218 (IPDTVNGGNSGNLDGEKPPEKKCIC) are disordered. Residues 207 to 218 (DGEKPPEKKCIC) are compositionally biased toward basic and acidic residues. Residues cysteine 216 and cysteine 218 are each lipidated (S-geranylgeranyl cysteine). Cysteine 218 bears the Cysteine methyl ester mark.

It belongs to the small GTPase superfamily. Rab family. As to quaternary structure, interacts with SYTL2, SYTL4, MYRIP and MLPH. Interacts with RPH3A and RPH3A. Interacts (GDP-bound form preferentially) with DENND10. As to expression, expressed primarily in testis.

Its subcellular location is the membrane. The protein resides in the late endosome. It carries out the reaction GTP + H2O = GDP + phosphate + H(+). With respect to regulation, regulated by guanine nucleotide exchange factors (GEFs) which promote the exchange of bound GDP for free GTP, GTPase activating proteins (GAPs) which increase the GTP hydrolysis activity, and GDP dissociation inhibitors which inhibit the dissociation of the nucleotide from the GTPase. Activated by GEFs such as DENND10. In terms of biological role, small GTPase which cycles between active GTP-bound and inactive GDP-bound states. In its active state, binds to a variety of effector proteins to regulate homeostasis of late endocytic pathway, including endosomal positioning, maturation and secretion. Plays a role in NTRK2/TRKB axonal anterograde transport by facilitating the association of NTRK2/TRKB with KLC1. May be involved in targeting uroplakins to urothelial apical membranes. In Homo sapiens (Human), this protein is Ras-related protein Rab-27B (RAB27B).